We begin with the raw amino-acid sequence, 461 residues long: Homocitrate synthase (461 aa).

In terms of domain architecture, Pyruvate carboxyltransferase spans 4–259 (VGILDSTLRE…IEVVKLDKLQ (256 aa)). Arg-12 contributes to the 2-oxoglutarate binding site. A Mg(2+)-binding site is contributed by Glu-13. Positions 76, 136, and 170 each coordinate 2-oxoglutarate. The Mg(2+) site is built by His-198 and His-200. The active-site Proton acceptor is His-292.

Belongs to the alpha-IPM synthase/homocitrate synthase family. Homocitrate synthase LYS20/LYS21 subfamily. The cofactor is Mg(2+). It depends on Mn(2+) as a cofactor.

The catalysed reaction is acetyl-CoA + 2-oxoglutarate + H2O = (2R)-homocitrate + CoA + H(+). It participates in amino-acid biosynthesis; L-lysine biosynthesis via AAA pathway; L-alpha-aminoadipate from 2-oxoglutarate: step 1/5. Functionally, catalyzes the aldol-type condensation of 2-oxoglutarate with acetyl-CoA to yield homocitrate. Carries out the first step of the alpha-aminoadipate (AAA) lysine biosynthesis pathway. The sequence is that of Homocitrate synthase from Saccharolobus solfataricus (strain ATCC 35092 / DSM 1617 / JCM 11322 / P2) (Sulfolobus solfataricus).